Here is a 466-residue protein sequence, read N- to C-terminus: RUS family member 1 (466 aa).

Ala2 is subject to N-acetylalanine. A helical membrane pass occupies residues 245 to 265; sequence LLMLPLVSDCLSLSLGCFILL.

This sequence belongs to the RUS1 family.

It localises to the membrane. This chain is RUS family member 1 (Rusf1), found in Rattus norvegicus (Rat).